The following is a 245-amino-acid chain: Ribonuclease 3 (245 aa).

One can recognise an RNase III domain in the interval 19 to 144; the sequence is ASILEERTGH…LIATIYLDGG (126 aa). Glu-57 serves as a coordination point for Mg(2+). The active site involves Asp-61. Asp-130 and Glu-133 together coordinate Mg(2+). The active site involves Glu-133. The DRBM domain maps to 169-238; that stretch reads DAKTELQEWA…AEAMLYREGV (70 aa).

Belongs to the ribonuclease III family. In terms of assembly, homodimer. It depends on Mg(2+) as a cofactor.

It is found in the cytoplasm. It carries out the reaction Endonucleolytic cleavage to 5'-phosphomonoester.. Its function is as follows. Digests double-stranded RNA. Involved in the processing of primary rRNA transcript to yield the immediate precursors to the large and small rRNAs (23S and 16S). Processes some mRNAs, and tRNAs when they are encoded in the rRNA operon. Processes pre-crRNA and tracrRNA of type II CRISPR loci if present in the organism. This chain is Ribonuclease 3, found in Brucella abortus (strain S19).